Here is a 145-residue protein sequence, read N- to C-terminus: MQGLIQRVKHAKVEINNQVVGEIGQGILVLLGVEKQDDEQAADKLLHKISNYRIFTDENDKMNLSLKDIAGELLVVSQFTLAANTKKGMRPSFSSAATPSQANELYEYFVAQAKALNLTVAAGEFGADMQVSLCNDGPVTFNLAV.

Positions glycine 137–proline 138 match the Gly-cisPro motif, important for rejection of L-amino acids motif.

Belongs to the DTD family. As to quaternary structure, homodimer.

It is found in the cytoplasm. It carries out the reaction glycyl-tRNA(Ala) + H2O = tRNA(Ala) + glycine + H(+). It catalyses the reaction a D-aminoacyl-tRNA + H2O = a tRNA + a D-alpha-amino acid + H(+). Functionally, an aminoacyl-tRNA editing enzyme that deacylates mischarged D-aminoacyl-tRNAs. Also deacylates mischarged glycyl-tRNA(Ala), protecting cells against glycine mischarging by AlaRS. Acts via tRNA-based rather than protein-based catalysis; rejects L-amino acids rather than detecting D-amino acids in the active site. By recycling D-aminoacyl-tRNA to D-amino acids and free tRNA molecules, this enzyme counteracts the toxicity associated with the formation of D-aminoacyl-tRNA entities in vivo and helps enforce protein L-homochirality. The protein is D-aminoacyl-tRNA deacylase of Pseudoalteromonas translucida (strain TAC 125).